We begin with the raw amino-acid sequence, 426 residues long: Monocarboxylate transporter 13 (426 aa).

The Cytoplasmic portion of the chain corresponds to 1-10; the sequence is MAYRAEPPDG. 12 consecutive transmembrane segments (helical) span residues 11 to 31, 52 to 72, 83 to 103, 106 to 126, 139 to 159, 172 to 192, 221 to 241, 244 to 264, 283 to 303, 306 to 326, 338 to 358, and 374 to 394; these read GWGW…FGVL, VSWI…VGSA, VMTG…ATSL, LYLS…TPTL, LAMG…APLF, LLLV…LRPL, VALT…VAHL, LGWD…SDLV, LLML…VAEA, GLVA…PVAF, IYCG…LGAP, and FVVA…LPHF. Residues 395–426 lie on the Cytoplasmic side of the membrane; sequence FCFSAPTSKPQDLVTEALDTKVPLPEEGLGED.

Belongs to the major facilitator superfamily. Monocarboxylate porter (TC 2.A.1.13) family.

It is found in the golgi apparatus membrane. The protein resides in the cell membrane. Proton-linked monocarboxylate transporter. May catalyze the transport of monocarboxylates across the plasma membrane. The chain is Monocarboxylate transporter 13 (SLC16A13) from Bos taurus (Bovine).